We begin with the raw amino-acid sequence, 63 residues long: Small ribosomal subunit protein bS21 (63 aa).

It belongs to the bacterial ribosomal protein bS21 family.

This chain is Small ribosomal subunit protein bS21, found in Porphyromonas gingivalis (strain ATCC BAA-308 / W83).